Here is a 265-residue protein sequence, read N- to C-terminus: Insulin-like growth factor-binding protein 5 (265 aa).

Positions 1-21 (MEMLLPMCLLLVSLCLGQCQA) are cleaved as a signal peptide. An IGFBP N-terminal domain is found at 24–104 (SFVHCEPCDD…LHGRGVCLNL (81 aa)). 6 disulfide bridges follow: Cys28/Cys54, Cys31/Cys56, Cys39/Cys57, Cys46/Cys60, Cys68/Cys81, and Cys75/Cys101. Over residues 111-121 (SKIDRESREED) the composition is skewed to basic and acidic residues. Positions 111–137 (SKIDRESREEDPTTSETEDIYQSKHRG) are disordered. The 75-residue stretch at 182-256 (MGPCRRQVET…IDYVNGDLQC (75 aa)) folds into the Thyroglobulin type-1 domain. Cystine bridges form between Cys185–Cys212, Cys223–Cys234, and Cys236–Cys256.

Its subcellular location is the secreted. In terms of biological role, IGF-binding proteins prolong the half-life of the IGFs and have been shown to either inhibit or stimulate the growth promoting effects of the IGFs on cell culture. They alter the interaction of IGFs with their cell surface receptors. Promotes anterior neural development by stimulating insulin growth factor (IGF) signaling via IGF receptors. This chain is Insulin-like growth factor-binding protein 5, found in Xenopus laevis (African clawed frog).